The following is a 111-amino-acid chain: Large ribosomal subunit protein P1 (111 aa).

The segment at 75-111 (AAAPAAEEKAEEEKKEEEEEKKEEEVDLSGLSGMFGF) is disordered. Acidic residues predominate over residues 88–101 (KKEEEEEKKEEEVD).

This sequence belongs to the eukaryotic ribosomal protein P1/P2 family. As to quaternary structure, part of the 50S ribosomal subunit. Homodimer, it forms part of the ribosomal stalk which helps the ribosome interact with GTP-bound translation factors. Forms a heptameric uL10/P0(P1)2(P1)2(P1)2 complex, where uL10/P0 forms an elongated spine to which the P1 dimers bind in a sequential fashion.

Its function is as follows. Forms part of the ribosomal stalk, playing a central role in the interaction of the ribosome with GTP-bound translation factors. This chain is Large ribosomal subunit protein P1, found in Aeropyrum pernix (strain ATCC 700893 / DSM 11879 / JCM 9820 / NBRC 100138 / K1).